A 1342-amino-acid chain; its full sequence is DNA-directed RNA polymerase subunit beta (1342 aa).

The protein belongs to the RNA polymerase beta chain family. The RNAP catalytic core consists of 2 alpha, 1 beta, 1 beta' and 1 omega subunit. When a sigma factor is associated with the core the holoenzyme is formed, which can initiate transcription.

It catalyses the reaction RNA(n) + a ribonucleoside 5'-triphosphate = RNA(n+1) + diphosphate. DNA-dependent RNA polymerase catalyzes the transcription of DNA into RNA using the four ribonucleoside triphosphates as substrates. In Glaesserella parasuis serovar 5 (strain SH0165) (Haemophilus parasuis), this protein is DNA-directed RNA polymerase subunit beta.